The chain runs to 451 residues: Serine--tRNA ligase (451 aa).

247–249 (TAE) serves as a coordination point for L-serine. Residues 278–280 (RKE) and V294 contribute to the ATP site. Residue E301 coordinates L-serine. 365–368 (ELAS) lines the ATP pocket. Residue T400 participates in L-serine binding.

This sequence belongs to the class-II aminoacyl-tRNA synthetase family. Type-1 seryl-tRNA synthetase subfamily. Homodimer. The tRNA molecule binds across the dimer.

It localises to the cytoplasm. It carries out the reaction tRNA(Ser) + L-serine + ATP = L-seryl-tRNA(Ser) + AMP + diphosphate + H(+). It catalyses the reaction tRNA(Sec) + L-serine + ATP = L-seryl-tRNA(Sec) + AMP + diphosphate + H(+). The protein operates within aminoacyl-tRNA biosynthesis; selenocysteinyl-tRNA(Sec) biosynthesis; L-seryl-tRNA(Sec) from L-serine and tRNA(Sec): step 1/1. Functionally, catalyzes the attachment of serine to tRNA(Ser). Is also able to aminoacylate tRNA(Sec) with serine, to form the misacylated tRNA L-seryl-tRNA(Sec), which will be further converted into selenocysteinyl-tRNA(Sec). The protein is Serine--tRNA ligase of Pyrobaculum aerophilum (strain ATCC 51768 / DSM 7523 / JCM 9630 / CIP 104966 / NBRC 100827 / IM2).